A 310-amino-acid polypeptide reads, in one-letter code: MAFEIDGKCLCYHGPLLYEARVLRVYDPASQTYRDRTRTGVPLEEEDGLPAESRGREHWFVHYQGWKSTWDEWVGQERIRPYNDENLALKRQLVQDAKAAAAAAKRAKARPGKRERSPAPAAPAAPAQGPRLAVRMPVELKALLVDDWERITKERKLVALPCAPTVGDILDAYYRERTAQLASPVAQTLLHEFVEGVHLYFDQCLSHLLLYRLERLQFDEACGGAAPAASGLPAPPEPRPSAVYGGVHLLRLLSMMPELICGTTMDEKSCHTVVAQCESLLAWMATHADDLVSGDYINTSAQYEGVALGM.

Residues 8-80 (KCLCYHGPLL…DEWVGQERIR (73 aa)) form the Tudor-knot domain. The interval 104–128 (AKRAKARPGKRERSPAPAAPAAPAQ) is disordered. Residues 118–127 (PAPAAPAAPA) show a composition bias toward low complexity. An MRG domain is found at 128–308 (QGPRLAVRMP…TSAQYEGVAL (181 aa)).

The protein belongs to the MRG family. As to quaternary structure, component of the NuA4 histone acetyltransferase complex.

It localises to the nucleus. Functionally, involved in deacetylation of histones, chromatin assembly and chromosome segregation. May act as a transcriptional oscillator, directing histone deacetylases to specific chromosomal domains. Component of the NuA4 histone acetyltransferase complex which is involved in transcriptional activation of selected genes principally by acetylation of nucleosomal histone H4 and H2A. The NuA4 complex is also involved in DNA repair. The polypeptide is Chromatin modification-related protein EAF3 (EAF3) (Eremothecium gossypii (strain ATCC 10895 / CBS 109.51 / FGSC 9923 / NRRL Y-1056) (Yeast)).